The chain runs to 408 residues: Argininosuccinate synthase (408 aa).

ATP-binding positions include 10 to 18 (AYSGGLDTS) and Ala37. L-citrulline is bound by residues Tyr90 and Ser95. Gly120 contacts ATP. Residues Thr122, Asn126, and Asp127 each coordinate L-aspartate. Asn126 provides a ligand contact to L-citrulline. Positions 130, 181, 190, 266, and 278 each coordinate L-citrulline.

Belongs to the argininosuccinate synthase family. Type 1 subfamily. As to quaternary structure, homotetramer.

The protein resides in the cytoplasm. It carries out the reaction L-citrulline + L-aspartate + ATP = 2-(N(omega)-L-arginino)succinate + AMP + diphosphate + H(+). Its pathway is amino-acid biosynthesis; L-arginine biosynthesis; L-arginine from L-ornithine and carbamoyl phosphate: step 2/3. In Laribacter hongkongensis (strain HLHK9), this protein is Argininosuccinate synthase.